A 373-amino-acid chain; its full sequence is Chorismate synthase (373 aa).

NADP(+) is bound by residues R48 and R54. FMN contacts are provided by residues R125–S127, N248–A249, G288, K303–S307, and R329.

It belongs to the chorismate synthase family. In terms of assembly, homotetramer. FMNH2 is required as a cofactor.

The catalysed reaction is 5-O-(1-carboxyvinyl)-3-phosphoshikimate = chorismate + phosphate. Its pathway is metabolic intermediate biosynthesis; chorismate biosynthesis; chorismate from D-erythrose 4-phosphate and phosphoenolpyruvate: step 7/7. In terms of biological role, catalyzes the anti-1,4-elimination of the C-3 phosphate and the C-6 proR hydrogen from 5-enolpyruvylshikimate-3-phosphate (EPSP) to yield chorismate, which is the branch point compound that serves as the starting substrate for the three terminal pathways of aromatic amino acid biosynthesis. This reaction introduces a second double bond into the aromatic ring system. The protein is Chorismate synthase of Colwellia psychrerythraea (strain 34H / ATCC BAA-681) (Vibrio psychroerythus).